A 396-amino-acid polypeptide reads, in one-letter code: Glutamyl-tRNA reductase (396 aa).

Residues 45 to 48 (TCNR), S101, 106 to 108 (EDQ), and Q112 contribute to the substrate site. C46 functions as the Nucleophile in the catalytic mechanism. 177 to 182 (GFGDVG) contributes to the NADP(+) binding site.

The protein belongs to the glutamyl-tRNA reductase family. As to quaternary structure, homodimer.

It carries out the reaction (S)-4-amino-5-oxopentanoate + tRNA(Glu) + NADP(+) = L-glutamyl-tRNA(Glu) + NADPH + H(+). It functions in the pathway porphyrin-containing compound metabolism; protoporphyrin-IX biosynthesis; 5-aminolevulinate from L-glutamyl-tRNA(Glu): step 1/2. Functionally, catalyzes the NADPH-dependent reduction of glutamyl-tRNA(Glu) to glutamate 1-semialdehyde (GSA). The chain is Glutamyl-tRNA reductase from Clostridium acetobutylicum (strain ATCC 824 / DSM 792 / JCM 1419 / IAM 19013 / LMG 5710 / NBRC 13948 / NRRL B-527 / VKM B-1787 / 2291 / W).